Reading from the N-terminus, the 637-residue chain is 1-deoxy-D-xylulose-5-phosphate synthase 1 (637 aa).

Thiamine diphosphate contacts are provided by residues H74 and 115–117 (GHS). Mg(2+) is bound at residue D146. Thiamine diphosphate-binding positions include 147–148 (GS), N175, Y286, and E368. N175 is a binding site for Mg(2+).

This sequence belongs to the transketolase family. DXPS subfamily. Homodimer. Mg(2+) serves as cofactor. Thiamine diphosphate is required as a cofactor.

It carries out the reaction D-glyceraldehyde 3-phosphate + pyruvate + H(+) = 1-deoxy-D-xylulose 5-phosphate + CO2. It functions in the pathway metabolic intermediate biosynthesis; 1-deoxy-D-xylulose 5-phosphate biosynthesis; 1-deoxy-D-xylulose 5-phosphate from D-glyceraldehyde 3-phosphate and pyruvate: step 1/1. Catalyzes the acyloin condensation reaction between C atoms 2 and 3 of pyruvate and glyceraldehyde 3-phosphate to yield 1-deoxy-D-xylulose-5-phosphate (DXP). In Geobacter sulfurreducens (strain ATCC 51573 / DSM 12127 / PCA), this protein is 1-deoxy-D-xylulose-5-phosphate synthase 1.